A 471-amino-acid polypeptide reads, in one-letter code: ATP synthase subunit beta (471 aa).

Position 152–159 (152–159) interacts with ATP; sequence GGAGVGKT.

The protein belongs to the ATPase alpha/beta chains family. As to quaternary structure, F-type ATPases have 2 components, CF(1) - the catalytic core - and CF(0) - the membrane proton channel. CF(1) has five subunits: alpha(3), beta(3), gamma(1), delta(1), epsilon(1). CF(0) has three main subunits: a(1), b(2) and c(9-12). The alpha and beta chains form an alternating ring which encloses part of the gamma chain. CF(1) is attached to CF(0) by a central stalk formed by the gamma and epsilon chains, while a peripheral stalk is formed by the delta and b chains.

It localises to the cell membrane. The catalysed reaction is ATP + H2O + 4 H(+)(in) = ADP + phosphate + 5 H(+)(out). Produces ATP from ADP in the presence of a proton gradient across the membrane. The catalytic sites are hosted primarily by the beta subunits. This chain is ATP synthase subunit beta, found in Herpetosiphon aurantiacus (Herpetosiphon giganteus).